We begin with the raw amino-acid sequence, 194 residues long: Type II methyltransferase M.MjaVI (194 aa).

The protein belongs to the N(4)/N(6)-methyltransferase family. N(4) subfamily.

It catalyses the reaction a 2'-deoxycytidine in DNA + S-adenosyl-L-methionine = an N(4)-methyl-2'-deoxycytidine in DNA + S-adenosyl-L-homocysteine + H(+). Functionally, a beta subtype methylase that recognizes the double-stranded sequence 5'-CCGG-3', methylates C-1 on both strands, and protects the DNA from cleavage by the MjaVI endonuclease. The chain is Type II methyltransferase M.MjaVI (mjaVIM) from Methanocaldococcus jannaschii (strain ATCC 43067 / DSM 2661 / JAL-1 / JCM 10045 / NBRC 100440) (Methanococcus jannaschii).